We begin with the raw amino-acid sequence, 387 residues long: MTLAYNKRHQIVRPDSCLSVLQQRLKYARSELQESACYFVENVPVWPGAAAPTPFAASTDIFQHADCNGAPPLINTICARDNALYGLDLSDENFLVTNGGMHGLSLVFRQIKRRSAEAGSAVCLAPVFGAVPALLEATGYDLIYYQMSAAFPTVEEILAVCRADTRLVYLNFPHNPLGGIYSDAFIEQLVPSLAERGISLVLDMVYDSFIFDDQKIRSPFACTNDLSLLYTVNSVSKNYGSPGLRIGWVASSSDNVEAMAGMLEIECVAVCSPAQTKAASLISMGNAPLHQQVVSSRAIVREFLGRHLSRYASLPPAGTQVFVNLPVHDIEGFADQMLGEYGLVLATASNYSGAQGAHIRIPTGYPESITHNALELLRQGIERYADV.

Lys-237 is subject to N6-(pyridoxal phosphate)lysine.

Belongs to the class-I pyridoxal-phosphate-dependent aminotransferase family. Pyridoxal 5'-phosphate serves as cofactor.

The catalysed reaction is (3R)-5-guanidino-3-methyl-2-oxopentanoate + L-aspartate = (3R)-3-methyl-L-arginine + oxaloacetate. Its pathway is antibiotic biosynthesis. Functionally, aminotransferase involved in the formation of the rare amino acid 3-methylarginine (MeArg), which is used as a potent antibiotic against the closely related soybean pathogen P.syringae pv. glycinea. Probably catalyzes transamination from the donor L-aspartate to 5-guanidino-3-methyl-2-oxopentanoic acid, generating 3-methylarginine. This chain is L-aspartate:5-guanidino-3-methyl-2-oxopentanoate transaminase, found in Pseudomonas syringae pv. syringae.